The sequence spans 486 residues: Aspartyl/glutamyl-tRNA(Asn/Gln) amidotransferase subunit B (486 aa).

The protein belongs to the GatB/GatE family. GatB subfamily. As to quaternary structure, heterotrimer of A, B and C subunits.

It carries out the reaction L-glutamyl-tRNA(Gln) + L-glutamine + ATP + H2O = L-glutaminyl-tRNA(Gln) + L-glutamate + ADP + phosphate + H(+). It catalyses the reaction L-aspartyl-tRNA(Asn) + L-glutamine + ATP + H2O = L-asparaginyl-tRNA(Asn) + L-glutamate + ADP + phosphate + 2 H(+). Its function is as follows. Allows the formation of correctly charged Asn-tRNA(Asn) or Gln-tRNA(Gln) through the transamidation of misacylated Asp-tRNA(Asn) or Glu-tRNA(Gln) in organisms which lack either or both of asparaginyl-tRNA or glutaminyl-tRNA synthetases. The reaction takes place in the presence of glutamine and ATP through an activated phospho-Asp-tRNA(Asn) or phospho-Glu-tRNA(Gln). This chain is Aspartyl/glutamyl-tRNA(Asn/Gln) amidotransferase subunit B, found in Azoarcus sp. (strain BH72).